An 85-amino-acid chain; its full sequence is Alpha-defensin 11 (85 aa).

The N-terminal stretch at Ala1 to Ala11 is a signal peptide. The propeptide occupies Asp12–Ser50. A disordered region spans residues Ile14–Leu46. Cystine bridges form between Cys56–Cys84, Cys58–Cys73, and Cys63–Cys83.

It belongs to the alpha-defensin family. As to expression, paneth cells of the small bowel.

It localises to the secreted. Probably contributes to the antimicrobial barrier function of the small bowel mucosa. In Mus musculus (Mouse), this protein is Alpha-defensin 11 (Defa11).